The following is a 193-amino-acid chain: Glycerol-3-phosphate acyltransferase (193 aa).

The next 5 helical transmembrane spans lie at 2–22 (AFIISIIIAYLLGSLSFAVIV), 51–71 (QAAFYVLLGDAAKGLIAVLIA), 78–98 (GVSLAFVGLVAVLGHLFPVYF), 112–132 (VLLGLSFWIGLFVIATWVIVV), and 154–174 (IIAGRTDYLFPVLIIAILIIW).

Belongs to the PlsY family. In terms of assembly, probably interacts with PlsX.

It localises to the cell inner membrane. The catalysed reaction is an acyl phosphate + sn-glycerol 3-phosphate = a 1-acyl-sn-glycero-3-phosphate + phosphate. Its pathway is lipid metabolism; phospholipid metabolism. Its function is as follows. Catalyzes the transfer of an acyl group from acyl-phosphate (acyl-PO(4)) to glycerol-3-phosphate (G3P) to form lysophosphatidic acid (LPA). This enzyme utilizes acyl-phosphate as fatty acyl donor, but not acyl-CoA or acyl-ACP. The protein is Glycerol-3-phosphate acyltransferase of Coxiella burnetii (strain CbuK_Q154) (Coxiella burnetii (strain Q154)).